The following is a 1481-amino-acid chain: Cystic fibrosis transmembrane conductance regulator (1481 aa).

Residues 1 to 77 (MQRSPLEKAS…KLINALRRCF (77 aa)) are Cytoplasmic-facing. A helical membrane pass occupies residues 78-98 (FWRFMFYGIILYLGEVTKAVQ). The ABC transmembrane type-1 1 domain maps to 81 to 365 (FMFYGIILYL…WAVQTWYDSL (285 aa)). The Extracellular segment spans residues 99-122 (PLLLGRIIASYDPDNEAERSIAIY). Residues 123 to 146 (LGIGLCLLFIVRTLLLHPAIFGLH) traverse the membrane as a helical segment. Topologically, residues 147 to 195 (HIGMQMRIAMFSLIYKKTLKLSSRVLDKISIGQLVSLLSNNLNKFDEGL) are cytoplasmic. Residues 196-216 (ALAHFVWIAPLQVTLLMGLLW) traverse the membrane as a helical segment. Residues 217–222 (DLLQAS) are Extracellular-facing. A helical membrane pass occupies residues 223–243 (AFCGLAFLIVLALFQAGLGRM). The Cytoplasmic portion of the chain corresponds to 244 to 298 (MMKYRDQRAGKINERLVITSEMIENIQSVKAYCWEEAMEKMIENLRQTELKLTRK). The chain crosses the membrane as a helical span at residues 299 to 319 (AAYVRYFNSSAFFFSGFFVVF). Over 320–339 (LSVLPYALIKGIVLRRIFTT) the chain is Extracellular. Residues 340–358 (ISFCIVLRMAVTRQFPWAV) form a helical membrane-spanning segment. The Cytoplasmic portion of the chain corresponds to 359–858 (QTWYDSLGAI…YLRYITIHKS (500 aa)). ATP-binding positions include Trp-401, Ser-433, 457–464 (GSTGAGKT), and Gln-492. The 224-residue stretch at 422–645 (NGDNSLFFSN…RPDFSSKLMG (224 aa)) folds into the ABC transporter 1 domain. The S-palmitoyl cysteine moiety is linked to residue Cys-523. Phosphoserine is present on residues Ser-548 and Ser-659. The tract at residues 653 to 831 (SAERRNSILT…EEINEDDLKE (179 aa)) is disordered R region. Ser-669 is subject to Phosphoserine; by PKA. Residue Ser-685 is modified to Phosphoserine. Residue Lys-687 forms a Glycyl lysine isopeptide (Lys-Gly) (interchain with G-Cter in ubiquitin) linkage. Phosphoserine is present on residues Ser-699 and Ser-711. At Thr-716 the chain carries Phosphothreonine. Phosphoserine is present on residues Ser-736, Ser-767, Ser-790, Ser-795, and Ser-813. Residues 859–879 (LIFVLIWCLVIFLAEVAASLV) traverse the membrane as a helical segment. One can recognise an ABC transmembrane type-1 2 domain in the interval 859–1155 (LIFVLIWCLV…AVNSSIDVDS (297 aa)). Over 880 to 918 (VLWLLKETPPQDSGNSTKGANNSYAVIITSTSSYYVFYI) the chain is Extracellular. N-linked (GlcNAc...) asparagine glycosylation is found at Asn-894 and Asn-900. A discontinuously helical transmembrane segment spans residues 919 to 939 (YVGVADTLLALGLFRGLPLVH). The Cytoplasmic portion of the chain corresponds to 940-990 (TLITVSKILHHKMLHSVLQAPMSTLNTLKAGGILNRFSKDMAILDDLLPLT). The chain crosses the membrane as a helical span at residues 991–1011 (IFDFIQLLLIVIGAVAVVSVL). At 1012–1013 (QP) the chain is on the extracellular side. Residues 1014-1034 (YIFLATVPVIAAFIILRAYFL) traverse the membrane as a helical segment. Topologically, residues 1035 to 1095 (HTSQQLKQLE…TANWFLYLST (61 aa)) are cytoplasmic. The chain crosses the membrane as a helical span at residues 1096–1116 (LRWFQMRIEMIFVIFFIAVTF). Topologically, residues 1117–1130 (ISILTTGEGEGTVG) are extracellular. The helical transmembrane segment at 1131–1151 (IILTLAMNIMSTLQWAVNSSI) threads the bilayer. The Cytoplasmic segment spans residues 1152 to 1481 (DVDSLMRSVS…TEEEVQETRL (330 aa)). In terms of domain architecture, ABC transporter 2 spans 1211 to 1444 (MTVKDLTAKY…KSLFQQAISS (234 aa)). ATP contacts are provided by residues Tyr-1220 and 1245-1252 (GRTGSGKS). Positions 1387–1481 (RTLKQAFADC…TEEEVQETRL (95 aa)) are interaction with GORASP2. A lipid anchor (S-palmitoyl cysteine) is attached at Cys-1396. Ser-1445 and Ser-1457 each carry phosphoserine. The interval 1449–1481 (KLFPHRNSSKHKSRSKIAALQEETEEEVQETRL) is disordered. Positions 1451-1463 (FPHRNSSKHKSRS) are enriched in basic residues. Positions 1470–1481 (EETEEEVQETRL) are enriched in acidic residues. The PDZ-binding motif lies at 1479–1481 (TRL).

This sequence belongs to the ABC transporter superfamily. ABCC family. CFTR transporter (TC 3.A.1.202) subfamily. In terms of assembly, monomer; does not require oligomerization for channel activity. May form oligomers in the membrane. Interacts with SLC26A3, SLC26A6 and NHERF1. Interacts with SHANK2. Interacts with MYO6. Interacts (via C-terminus) with GOPC (via PDZ domain); this promotes CFTR internalization and thereby decreases channel activity. Interacts with SLC4A7 through NHERF1. Found in a complex with MYO5B and RAB11A. Interacts with ANO1. Interacts with SLC26A8. Interacts with AHCYL1; the interaction increases CFTR activity. Interacts with CSE1L. The core-glycosylated form interacts with GORASP2 (via PDZ GRASP-type 1 domain) in respone to ER stress. Interacts with MARCHF2; the interaction leads to CFTR ubiqtuitination and degradation. Interacts with ADGRG2. N-glycosylated. Post-translationally, phosphorylated; cAMP treatment promotes phosphorylation and activates the channel. Dephosphorylation decreases the ATPase activity (in vitro). Phosphorylation at PKA sites activates the channel. Phosphorylation at PKC sites enhances the response to phosphorylation by PKA. Phosphorylated by AMPK; this inhibits channel activity. In terms of processing, ubiquitinated, leading to its degradation in the lysosome. Deubiquitination by USP10 in early endosomes enhances its endocytic recycling to the cell membrane. Ubiquitinated by RNF185 during ER stress. Ubiquitinated by MARCHF2.

It localises to the apical cell membrane. The protein localises to the early endosome membrane. The protein resides in the cell membrane. Its subcellular location is the recycling endosome membrane. It is found in the endoplasmic reticulum membrane. It localises to the nucleus. The enzyme catalyses ATP + H2O + closed Cl(-) channel = ADP + phosphate + open Cl(-) channel.. The catalysed reaction is chloride(in) = chloride(out). It catalyses the reaction hydrogencarbonate(in) = hydrogencarbonate(out). It carries out the reaction ATP + H2O = ADP + phosphate + H(+). Its function is as follows. Epithelial ion channel that plays an important role in the regulation of epithelial ion and water transport and fluid homeostasis. Mediates the transport of chloride ions across the cell membrane. Possesses an intrinsic ATPase activity and utilizes ATP to gate its channel; the passive flow of anions through the channel is gated by cycles of ATP binding and hydrolysis by the ATP-binding domains. The ion channel is also permeable to HCO(3)(-); selectivity depends on the extracellular chloride concentration. Exerts its function also by modulating the activity of other ion channels and transporters. Contributes to the regulation of the pH and the ion content of the epithelial fluid layer. Modulates the activity of the epithelial sodium channel (ENaC) complex, in part by regulating the cell surface expression of the ENaC complex. May regulate bicarbonate secretion and salvage in epithelial cells by regulating the transporter SLC4A7. Can inhibit the chloride channel activity of ANO1. Plays a role in the chloride and bicarbonate homeostasis during sperm epididymal maturation and capacitation. The sequence is that of Cystic fibrosis transmembrane conductance regulator from Equus caballus (Horse).